Consider the following 871-residue polypeptide: DNA mismatch repair protein MutS 1 (871 aa).

614–621 is an ATP binding site; the sequence is GPNMSGKS.

This sequence belongs to the DNA mismatch repair MutS family.

In terms of biological role, this protein is involved in the repair of mismatches in DNA. It is possible that it carries out the mismatch recognition step. This protein has a weak ATPase activity. This Halobacterium salinarum (strain ATCC 29341 / DSM 671 / R1) protein is DNA mismatch repair protein MutS 1.